The following is a 104-amino-acid chain: Large ribosomal subunit protein uL24 (104 aa).

The protein belongs to the universal ribosomal protein uL24 family. As to quaternary structure, part of the 50S ribosomal subunit.

One of two assembly initiator proteins, it binds directly to the 5'-end of the 23S rRNA, where it nucleates assembly of the 50S subunit. In terms of biological role, one of the proteins that surrounds the polypeptide exit tunnel on the outside of the subunit. The sequence is that of Large ribosomal subunit protein uL24 from Shigella dysenteriae serotype 1 (strain Sd197).